The following is a 369-amino-acid chain: Uroporphyrinogen decarboxylase (369 aa).

Substrate-binding positions include 36–40 (RQAGR), D86, Y162, S217, and H342.

The protein belongs to the uroporphyrinogen decarboxylase family. In terms of assembly, homodimer.

It is found in the cytoplasm. It carries out the reaction uroporphyrinogen III + 4 H(+) = coproporphyrinogen III + 4 CO2. The protein operates within porphyrin-containing compound metabolism; protoporphyrin-IX biosynthesis; coproporphyrinogen-III from 5-aminolevulinate: step 4/4. Functionally, catalyzes the decarboxylation of four acetate groups of uroporphyrinogen-III to yield coproporphyrinogen-III. This is Uroporphyrinogen decarboxylase from Albidiferax ferrireducens (strain ATCC BAA-621 / DSM 15236 / T118) (Rhodoferax ferrireducens).